The chain runs to 96 residues: Large ribosomal subunit protein uL23 (96 aa).

Belongs to the universal ribosomal protein uL23 family. Part of the 50S ribosomal subunit. Contacts protein L29, and trigger factor when it is bound to the ribosome.

In terms of biological role, one of the early assembly proteins it binds 23S rRNA. One of the proteins that surrounds the polypeptide exit tunnel on the outside of the ribosome. Forms the main docking site for trigger factor binding to the ribosome. The polypeptide is Large ribosomal subunit protein uL23 (Caldicellulosiruptor saccharolyticus (strain ATCC 43494 / DSM 8903 / Tp8T 6331)).